The sequence spans 299 residues: DNA-binding transcriptional repressor CapW (299 aa).

The disordered stretch occupies residues 1-22; the sequence is MTDESKPTDDQPTSKGRQGARW. The segment at 1–95 is winged HTH domain; it reads MTDESKPTDD…SFKAVFPSSA (95 aa). The tract at residues 96 to 207 is WYL domain; sequence VERYLDDLLR…LTRIKCCKYV (112 aa). The WYL domain occupies 131–211; that stretch reads GRRLNADIVG…KCCKYVGQDR (81 aa). The probable ligand-binding region stretch occupies residues 156–200; that stretch reads YQSLTDPEGGERMLSPHALVHDGNRWHVRAYCHKRKAFRDFSLTR. The interval 208-299 is WCX domain; sequence GQDRDRADED…RDEIKDLIQY (92 aa).

As to quaternary structure, homodimer.

Transcriptional regulator of a CBASS antivirus system. CBASS (cyclic oligonucleotide-based antiphage signaling system) provides immunity against bacteriophage. The CD-NTase protein synthesizes cyclic nucleotides in response to infection; these serve as specific second messenger signals. The signals activate a diverse range of effectors, leading to bacterial cell death and thus abortive phage infection. A type III CBASS system, part of a Cap17-CapW-CdnC-Cap7-Cap6-Cap18 locus. Binds specifically to palindromes that overlap the -10 site in the promoter of cdnC, found between the genes for divergently transcribed capW and cdnC (cognate DNA). Probably represses transcription bidirectionally from the promoter. In Pseudomonas aeruginosa, this protein is DNA-binding transcriptional repressor CapW.